The chain runs to 255 residues: H-2 class II histocompatibility antigen, E-D alpha chain (255 aa).

The N-terminal stretch at Met-1 to Ala-25 is a signal peptide. Residues Ile-26 to Asn-109 form an alpha-1 region. The Extracellular segment spans residues Ile-26–Glu-216. The segment at Val-110 to Trp-203 is alpha-2. The Ig-like C1-type domain maps to Pro-112–Glu-204. An intrachain disulfide couples Cys-132 to Cys-188. Asn-143 carries an N-linked (GlcNAc...) asparagine glycan. Residues Glu-204–Glu-216 are connecting peptide. The helical transmembrane segment at Asn-217 to Ile-242 threads the bilayer. Residues Lys-243–Leu-255 are Cytoplasmic-facing.

This sequence belongs to the MHC class II family.

It is found in the membrane. This Mus musculus (Mouse) protein is H-2 class II histocompatibility antigen, E-D alpha chain (H2-Ea).